The primary structure comprises 97 residues: Putative mitochondrial import inner membrane translocase subunit Tim8 A-B (97 aa).

The Twin CX3C motif signature appears at 43–66; sequence CWEKCMDKPGPRLDGRAELCLVNC. 2 disulfides stabilise this stretch: Cys-43/Cys-66 and Cys-47/Cys-62.

Belongs to the small Tim family. As to quaternary structure, heterohexamer; possibly composed of 3 copies of TIMM8AB and 3 copies of TIMM13.

It localises to the mitochondrion inner membrane. Its function is as follows. Putative mitochondrial intermembrane chaperone that participates in the import and insertion of some multi-pass transmembrane proteins into the mitochondrial inner membrane. Also required for the transfer of beta-barrel precursors from the TOM complex to the sorting and assembly machinery (SAM complex) of the outer membrane. Acts as a chaperone-like protein that protects the hydrophobic precursors from aggregation and guide them through the mitochondrial intermembrane space. In Mus musculus (Mouse), this protein is Putative mitochondrial import inner membrane translocase subunit Tim8 A-B (Timm8a2).